A 103-amino-acid chain; its full sequence is Large ribosomal subunit protein uL24 (103 aa).

It belongs to the universal ribosomal protein uL24 family. In terms of assembly, part of the 50S ribosomal subunit.

In terms of biological role, one of two assembly initiator proteins, it binds directly to the 5'-end of the 23S rRNA, where it nucleates assembly of the 50S subunit. One of the proteins that surrounds the polypeptide exit tunnel on the outside of the subunit. This chain is Large ribosomal subunit protein uL24, found in Halalkalibacterium halodurans (strain ATCC BAA-125 / DSM 18197 / FERM 7344 / JCM 9153 / C-125) (Bacillus halodurans).